Reading from the N-terminus, the 573-residue chain is Sulfite reductase [NADPH] hemoprotein beta-component (573 aa).

The [4Fe-4S] cluster site is built by C436, C442, C481, and C485. C485 is a binding site for siroheme.

Belongs to the nitrite and sulfite reductase 4Fe-4S domain family. As to quaternary structure, alpha(8)-beta(8). The alpha component is a flavoprotein, the beta component is a hemoprotein. Siroheme is required as a cofactor. It depends on [4Fe-4S] cluster as a cofactor.

The enzyme catalyses hydrogen sulfide + 3 NADP(+) + 3 H2O = sulfite + 3 NADPH + 4 H(+). The protein operates within sulfur metabolism; hydrogen sulfide biosynthesis; hydrogen sulfide from sulfite (NADPH route): step 1/1. In terms of biological role, component of the sulfite reductase complex that catalyzes the 6-electron reduction of sulfite to sulfide. This is one of several activities required for the biosynthesis of L-cysteine from sulfate. This chain is Sulfite reductase [NADPH] hemoprotein beta-component, found in Alteromonas mediterranea (strain DSM 17117 / CIP 110805 / LMG 28347 / Deep ecotype).